Reading from the N-terminus, the 446-residue chain is tRNA-2-methylthio-N(6)-dimethylallyladenosine synthase (446 aa).

The MTTase N-terminal domain maps to 3–124 (KKLYIKTYGC…LPELISKVVR (122 aa)). The [4Fe-4S] cluster site is built by C12, C48, C87, C162, C166, and C169. The Radical SAM core domain maps to 148 to 380 (YPQGASSFIS…QKELAAQQLA (233 aa)). Residues 383–446 (ESCIGSTMKV…LNSLSGEIYR (64 aa)) form the TRAM domain.

This sequence belongs to the methylthiotransferase family. MiaB subfamily. As to quaternary structure, monomer. [4Fe-4S] cluster is required as a cofactor.

Its subcellular location is the cytoplasm. The catalysed reaction is N(6)-dimethylallyladenosine(37) in tRNA + (sulfur carrier)-SH + AH2 + 2 S-adenosyl-L-methionine = 2-methylsulfanyl-N(6)-dimethylallyladenosine(37) in tRNA + (sulfur carrier)-H + 5'-deoxyadenosine + L-methionine + A + S-adenosyl-L-homocysteine + 2 H(+). Functionally, catalyzes the methylthiolation of N6-(dimethylallyl)adenosine (i(6)A), leading to the formation of 2-methylthio-N6-(dimethylallyl)adenosine (ms(2)i(6)A) at position 37 in tRNAs that read codons beginning with uridine. The sequence is that of tRNA-2-methylthio-N(6)-dimethylallyladenosine synthase from Rickettsia bellii (strain OSU 85-389).